The following is a 258-amino-acid chain: Imidazole glycerol phosphate synthase subunit HisF (258 aa).

Catalysis depends on residues aspartate 11 and aspartate 130.

This sequence belongs to the HisA/HisF family. In terms of assembly, heterodimer of HisH and HisF.

The protein resides in the cytoplasm. The enzyme catalyses 5-[(5-phospho-1-deoxy-D-ribulos-1-ylimino)methylamino]-1-(5-phospho-beta-D-ribosyl)imidazole-4-carboxamide + L-glutamine = D-erythro-1-(imidazol-4-yl)glycerol 3-phosphate + 5-amino-1-(5-phospho-beta-D-ribosyl)imidazole-4-carboxamide + L-glutamate + H(+). It functions in the pathway amino-acid biosynthesis; L-histidine biosynthesis; L-histidine from 5-phospho-alpha-D-ribose 1-diphosphate: step 5/9. In terms of biological role, IGPS catalyzes the conversion of PRFAR and glutamine to IGP, AICAR and glutamate. The HisF subunit catalyzes the cyclization activity that produces IGP and AICAR from PRFAR using the ammonia provided by the HisH subunit. The protein is Imidazole glycerol phosphate synthase subunit HisF of Sodalis glossinidius (strain morsitans).